A 671-amino-acid chain; its full sequence is DNA ligase (671 aa).

NAD(+) contacts are provided by residues 32 to 36 (DAEYD), 81 to 82 (SL), and Glu113. Lys115 (N6-AMP-lysine intermediate) is an active-site residue. Arg136, Glu173, Lys290, and Lys314 together coordinate NAD(+). Cys408, Cys411, Cys426, and Cys432 together coordinate Zn(2+). The region spanning 593 to 671 (EIDSPFAGKT…EAEMLRLLGS (79 aa)) is the BRCT domain.

The protein belongs to the NAD-dependent DNA ligase family. LigA subfamily. Mg(2+) serves as cofactor. It depends on Mn(2+) as a cofactor.

The catalysed reaction is NAD(+) + (deoxyribonucleotide)n-3'-hydroxyl + 5'-phospho-(deoxyribonucleotide)m = (deoxyribonucleotide)n+m + AMP + beta-nicotinamide D-nucleotide.. Its function is as follows. DNA ligase that catalyzes the formation of phosphodiester linkages between 5'-phosphoryl and 3'-hydroxyl groups in double-stranded DNA using NAD as a coenzyme and as the energy source for the reaction. It is essential for DNA replication and repair of damaged DNA. In Shigella sonnei (strain Ss046), this protein is DNA ligase.